We begin with the raw amino-acid sequence, 211 residues long: Nucleoside triphosphate pyrophosphatase (211 aa).

D78 acts as the Proton acceptor in catalysis.

This sequence belongs to the Maf family. A divalent metal cation is required as a cofactor.

It localises to the cytoplasm. The enzyme catalyses a ribonucleoside 5'-triphosphate + H2O = a ribonucleoside 5'-phosphate + diphosphate + H(+). It carries out the reaction a 2'-deoxyribonucleoside 5'-triphosphate + H2O = a 2'-deoxyribonucleoside 5'-phosphate + diphosphate + H(+). Nucleoside triphosphate pyrophosphatase. May have a dual role in cell division arrest and in preventing the incorporation of modified nucleotides into cellular nucleic acids. The sequence is that of Nucleoside triphosphate pyrophosphatase from Mycolicibacterium smegmatis (strain ATCC 700084 / mc(2)155) (Mycobacterium smegmatis).